Reading from the N-terminus, the 88-residue chain is MNDSELTQFVTQLLWIVLFTSMPVVLVASVVGVIVSLVQALTQIQDQTLQFMIKLLAIAITLMVSYPWLSGILLNYTRQIMLRIGEHG.

Transmembrane regions (helical) follow at residues 15-35 (WIVL…GVIV) and 55-75 (LLAI…ILLN).

Belongs to the FliQ/MopD/SpaQ family.

It is found in the cell membrane. Functionally, part of a type III secretion system. This chain is Secretion system apparatus protein SsaS (ssaS), found in Salmonella typhimurium (strain LT2 / SGSC1412 / ATCC 700720).